Here is a 140-residue protein sequence, read N- to C-terminus: MAKKVIGKIKLQIPAGKANPAPPVGPALGQHGVNIMEFCKAFNAKTQDQAGMIIPVEITVYADRSFDFITKTPPASDLLKKAAGLERASGQPNINKVGTVTKEDIKEIAELKMPDLNAGSLEAAMRMIEGTARSMGIVVK.

The protein belongs to the universal ribosomal protein uL11 family. Part of the ribosomal stalk of the 50S ribosomal subunit. Interacts with L10 and the large rRNA to form the base of the stalk. L10 forms an elongated spine to which L12 dimers bind in a sequential fashion forming a multimeric L10(L12)X complex. One or more lysine residues are methylated.

Its function is as follows. Forms part of the ribosomal stalk which helps the ribosome interact with GTP-bound translation factors. The protein is Large ribosomal subunit protein uL11 of Halothermothrix orenii (strain H 168 / OCM 544 / DSM 9562).